The primary structure comprises 1156 residues: Nuclear pore-associated protein 1 (1156 aa).

8 disordered regions span residues 1–60 (MGNL…RRPS), 155–204 (EGPR…FRCS), 219–266 (NSMS…PEPA), 481–515 (GGSY…TRES), 680–703 (TLVN…MHTT), 732–786 (NTQP…KTSL), 872–915 (STSF…SSFI), and 1026–1046 (APGP…SGTP). Residues 50 to 59 (LFRRNARRRP) are compositionally biased toward basic residues. The segment covering 156–165 (GPRRVKKDED) has biased composition (basic and acidic residues). Polar residues-rich tracts occupy residues 179-197 (PLSS…TQGD) and 219-231 (NSMS…SPAS). 4 stretches are compositionally biased toward polar residues: residues 680–692 (TLVN…SSSK), 732–750 (NTQP…SLPA), 884–915 (TTTS…SSFI), and 1028–1046 (GPSS…SGTP).

In terms of assembly, associates with the nuclear pore complex (NPC). Testis-specific in adults. In fetal brain expressed only from the paternal allele.

It is found in the nucleus. Its subcellular location is the nucleoplasm. It localises to the nucleus inner membrane. Functionally, may be involved in spermatogenesis. This Homo sapiens (Human) protein is Nuclear pore-associated protein 1 (NPAP1).